The sequence spans 351 residues: Molybdenum import ATP-binding protein ModC (351 aa).

The ABC transporter domain occupies 1–229 (MLKINVKKQL…PLFLPWKLED (229 aa)). 31 to 38 (GLSGSGKT) is a binding site for ATP. Positions 289-351 (KTSIRNILHG…FAQIKAVSVL (63 aa)) constitute a Mop domain.

The protein belongs to the ABC transporter superfamily. Molybdate importer (TC 3.A.1.8) family. As to quaternary structure, the complex is composed of two ATP-binding proteins (ModC), two transmembrane proteins (ModB) and a solute-binding protein (ModA).

It localises to the cell inner membrane. The catalysed reaction is molybdate(out) + ATP + H2O = molybdate(in) + ADP + phosphate + H(+). Functionally, part of the ABC transporter complex ModABC involved in molybdenum import. Responsible for energy coupling to the transport system. The polypeptide is Molybdenum import ATP-binding protein ModC (Pasteurella multocida (strain Pm70)).